We begin with the raw amino-acid sequence, 118 residues long: UPF0102 protein RHA1_ro06551 (118 aa).

This sequence belongs to the UPF0102 family.

The polypeptide is UPF0102 protein RHA1_ro06551 (Rhodococcus jostii (strain RHA1)).